A 234-amino-acid chain; its full sequence is MEFSPPLQRATLIQRYKRFLADVITPDGRELTLHCPNTGAMTGCATPGDTVWYSTSDNTKRKYPHTWELTQSQSGAFICVNTLWANRLTKEAILNESISELSGYSSLKSEVKYGSERSRIDFMLQADSRPDCYIEVKSVTLAENEQGYFPDAVTERGQKHLRELMNVAAEGQRAVIFFAVLHSAITRFSPARHIDEKYAQLLSEAQQRGVEILAYKAEISAEGMALKKSLPVTL.

A DNA-binding region (H-T-H motif) is located at residues 201–220 (LLSEAQQRGVEILAYKAEIS).

It belongs to the SfsA family.

Functionally, binds to DNA non-specifically. Could be a regulatory factor involved in maltose metabolism. The polypeptide is Sugar fermentation stimulation protein A (Shigella flexneri serotype 5b (strain 8401)).